Consider the following 270-residue polypeptide: Probable inositol 1-monophosphatase ImpA (270 aa).

Mg(2+) is bound by residues glutamate 69, aspartate 85, isoleucine 87, and aspartate 88. Glutamate 69 is a binding site for substrate. Substrate-binding positions include 87-90 (IDGT), arginine 187, and aspartate 216. Residue aspartate 216 coordinates Mg(2+).

It belongs to the inositol monophosphatase superfamily. Mg(2+) is required as a cofactor.

The catalysed reaction is a myo-inositol phosphate + H2O = myo-inositol + phosphate. It participates in polyol metabolism; myo-inositol biosynthesis; myo-inositol from D-glucose 6-phosphate: step 2/2. In terms of biological role, catalyzes the dephosphorylation of inositol 1-phosphate (I-1-P) to yield free myo-inositol, a key metabolite in mycobacteria. The chain is Probable inositol 1-monophosphatase ImpA (impA) from Mycobacterium tuberculosis (strain ATCC 25618 / H37Rv).